Reading from the N-terminus, the 475-residue chain is Ribulose bisphosphate carboxylase large chain (475 aa).

Residues 1–2 (MS) constitute a propeptide that is removed on maturation. The residue at position 3 (Pro-3) is an N-acetylproline. An N6,N6,N6-trimethyllysine modification is found at Lys-14. The active-site Proton acceptor is Lys-175. D-ribulose 1,5-bisphosphate-binding residues include Lys-175 and Lys-177. 3 residues coordinate Mg(2+): Lys-201, Asp-203, and Glu-204. Lys-201 is subject to N6-carboxylysine. Residue Glu-204 coordinates D-ribulose 1,5-bisphosphate. The active-site Proton acceptor is the His-294. D-ribulose 1,5-bisphosphate contacts are provided by Arg-295, His-327, Lys-334, Ser-379, Gly-381, Gly-403, and Gly-404.

This sequence belongs to the RuBisCO large chain family. Type I subfamily. As to quaternary structure, heterohexadecamer of 8 large chains and 8 small chains. Heterohexadecamer; disulfide-linked. The disulfide link is formed within the large subunit homodimers. It depends on Mg(2+) as a cofactor. The disulfide bond which can form in the large chain dimeric partners within the hexadecamer appears to be associated with oxidative stress and protein turnover.

It is found in the plastid. Its subcellular location is the chloroplast. It catalyses the reaction 2 (2R)-3-phosphoglycerate + 2 H(+) = D-ribulose 1,5-bisphosphate + CO2 + H2O. The enzyme catalyses D-ribulose 1,5-bisphosphate + O2 = 2-phosphoglycolate + (2R)-3-phosphoglycerate + 2 H(+). In terms of biological role, ruBisCO catalyzes two reactions: the carboxylation of D-ribulose 1,5-bisphosphate, the primary event in carbon dioxide fixation, as well as the oxidative fragmentation of the pentose substrate in the photorespiration process. Both reactions occur simultaneously and in competition at the same active site. Binds to abscisic acid (ABA); only half of the possible binding sites are occupied in the crystal and there are indications this is a low affinity site. The polypeptide is Ribulose bisphosphate carboxylase large chain (Pisum sativum (Garden pea)).